A 152-amino-acid chain; its full sequence is MESWLFLLLIALIAFVAKNQSLLIASVVVLALKALPNSAKIMSWLSDKGINLGVTIISITILVPIATGQIGLKDLIQSFKTPMGWLGILCGILVAVLSSKGVGLINQSPEITVALVFGTILGVVFLKGIAAGPIIASGMMYVIITTFQAFQH.

The next 4 membrane-spanning stretches (helical) occupy residues 4 to 24 (WLFL…SLLI), 52 to 72 (LGVT…QIGL), 85 to 105 (WLGI…VGLI), and 115 to 135 (LVFG…GPII).

It belongs to the UPF0756 family.

It is found in the cell membrane. The protein is UPF0756 membrane protein EF_1246 of Enterococcus faecalis (strain ATCC 700802 / V583).